A 329-amino-acid chain; its full sequence is Adenylate isopentenyltransferase 7, mitochondrial (329 aa).

Residues 1–40 constitute a mitochondrion transit peptide; that stretch reads MKFSISSLKQVQPILCFKNKLSKVNVNSFLHPKEKVIFVM. An ATP-binding site is contributed by 41–48; that stretch reads GATGSGKS.

It belongs to the IPP transferase family. In terms of tissue distribution, expressed in both the vascular stele and the phloem companion cells of the root, in endodermis of the root elongation zone, trichomes on young leaves, and some pollen tubes.

The protein resides in the mitochondrion. It carries out the reaction dimethylallyl diphosphate + ADP = N(6)-(dimethylallyl)adenosine 5'-diphosphate + diphosphate. It catalyses the reaction dimethylallyl diphosphate + ATP = N(6)-(dimethylallyl)adenosine 5'-triphosphate + diphosphate. Its function is as follows. Involved in cytokinin biosynthesis. Catalyzes the transfer of an isopentenyl group from dimethylallyl diphosphate (DMAPP) to ATP and ADP. This is Adenylate isopentenyltransferase 7, mitochondrial (IPT7) from Arabidopsis thaliana (Mouse-ear cress).